Here is a 235-residue protein sequence, read N- to C-terminus: Endonuclease V (235 aa).

Residues Asp47 and Asp115 each contribute to the Mg(2+) site.

It belongs to the endonuclease V family. It depends on Mg(2+) as a cofactor.

The protein localises to the cytoplasm. The enzyme catalyses Endonucleolytic cleavage at apurinic or apyrimidinic sites to products with a 5'-phosphate.. In terms of biological role, DNA repair enzyme involved in the repair of deaminated bases. Selectively cleaves double-stranded DNA at the second phosphodiester bond 3' to a deoxyinosine leaving behind the intact lesion on the nicked DNA. This is Endonuclease V from Myxococcus xanthus (strain DK1622).